Consider the following 629-residue polypeptide: tRNA uridine 5-carboxymethylaminomethyl modification enzyme MnmG (629 aa).

Residues 14-19 (GAGHAG), Val126, and Ser181 contribute to the FAD site. 273 to 287 (GPRYCPSIEDKVVRF) is an NAD(+) binding site. Gln370 is a binding site for FAD.

The protein belongs to the MnmG family. Homodimer. Heterotetramer of two MnmE and two MnmG subunits. The cofactor is FAD.

The protein localises to the cytoplasm. In terms of biological role, NAD-binding protein involved in the addition of a carboxymethylaminomethyl (cmnm) group at the wobble position (U34) of certain tRNAs, forming tRNA-cmnm(5)s(2)U34. This Bacillus cereus (strain ATCC 14579 / DSM 31 / CCUG 7414 / JCM 2152 / NBRC 15305 / NCIMB 9373 / NCTC 2599 / NRRL B-3711) protein is tRNA uridine 5-carboxymethylaminomethyl modification enzyme MnmG.